A 348-amino-acid polypeptide reads, in one-letter code: Calcium homeostasis modulator protein 1 (348 aa).

The Cytoplasmic segment spans residues 1–20 (MDKFRMIFQFLQSNQESFMN). The central pore stretch occupies residues 9–36 (QFLQSNQESFMNGICGIMALASAQMYSA). A helical membrane pass occupies residues 21–36 (GICGIMALASAQMYSA). Topologically, residues 37 to 48 (FDFNCPCLPGYN) are extracellular. 2 cysteine pairs are disulfide-bonded: Cys-41/Cys-126 and Cys-43/Cys-160. Residues 49–71 (VVYSLGILLTPPLVLFLLGLVMN) form a helical membrane-spanning segment. The segment at 62 to 69 (VLFLLGLV) is phospholipid-binding. Topologically, residues 72–98 (NNISMLAEEWKRPAGRRAKDPAVLRYM) are cytoplasmic. Residues 99–124 (FCSMAQRALIAPVVWVAVTLLDGKCF) traverse the membrane as a helical segment. Cys-100 carries S-palmitoyl cysteine lipidation. A phospholipid-binding region spans residues 104 to 116 (QRALIAPVVWVAV). Residues 125-179 (LCAFCTAVPVATLGNGSLVPGLPAPELARLLARVPCPEIYDGNWLLAREVAVRYL) are Extracellular-facing. Asn-139 carries an N-linked (GlcNAc...) asparagine glycan. Residues 180-205 (RCISQALGWSFVLLTTLLAFVVRSVR) traverse the membrane as a helical segment. A phospholipid-binding region spans residues 191–201 (VLLTTLLAFVV). Over 206 to 348 (PCFTQVAFLK…KEVATYFSKV (143 aa)) the chain is Cytoplasmic. Cys-207 is lipidated: S-palmitoyl cysteine. The segment at 324–348 (LMSNGWAGGEPRPPRKEVATYFSKV) is disordered.

It belongs to the CALHM family. Oligomerizes to form hexamers and octamers. Does not form gap junctions. Associates with CALHM3 as a pore-forming subunit in a hetero-hexameric channel complex. Post-translationally, N-glycosylated. Assembly with CALHM3 is associated with N-glycan remodeling and formation of hybrid complex- and high mannose-type glycochains. This N-glycan processing regulates channel trafficking and gating kinetics. Palmitoylated by ZDHHC3, ZDHHC20 and possibly ZDHHC7. Palmitoylation regulates voltage-dependent gating of the channel by shifting it toward more depolarized potentials. Specifically expressed in type II taste bud cells (at protein level). Not expressed in brain.

Its subcellular location is the cell membrane. It localises to the endoplasmic reticulum membrane. The protein localises to the basolateral cell membrane. It carries out the reaction ATP(in) = ATP(out). It catalyses the reaction Ca(2+)(in) = Ca(2+)(out). The enzyme catalyses Mg(2+)(in) = Mg(2+)(out). The catalysed reaction is Na(+)(in) = Na(+)(out). It carries out the reaction K(+)(in) = K(+)(out). It catalyses the reaction Li(+)(in) = Li(+)(out). The enzyme catalyses Rb(+)(in) = Rb(+)(out). The catalysed reaction is Cs(+)(in) = Cs(+)(out). It carries out the reaction chloride(in) = chloride(out). Its activity is regulated as follows. Regulated by membrane voltage and extracellular Ca(2+). Inhibited by Gd(3+), ruthenium red, and Zn(2+) and partially inhibited by 2-aminoethoxydiphenyl borate. Functionally, pore-forming subunit of gustatory voltage-gated ion channels required for sensory perception of sweet, bitter and umami tastes. With CALHM3 forms a fast-activating voltage-gated ATP-release channel in type II taste bud cells, ATP acting as a neurotransmitter to activate afferent neural gustatory pathways. Acts both as a voltage-gated and calcium-activated ion channel: mediates neuronal excitability in response to membrane depolarization and low extracellular Ca(2+) concentration. Has poor ion selectivity and forms a wide pore (around 14 Angstroms) that mediates permeation of small ions including Ca(2+), Na(+), K(+) and Cl(-), as well as larger ions such as ATP(4-). Mediates Ca(2+) influx and downstream activation of the ERK1 and ERK2 cascade in neurons. Triggers endoplasmic reticulum stress by reducing the calcium content of the endoplasmic reticulum. May indirectly control amyloid precursor protein (APP) proteolysis and aggregated amyloid-beta (Abeta) peptides levels in a Ca(2+) dependent manner. The chain is Calcium homeostasis modulator protein 1 from Mus musculus (Mouse).